Here is a 295-residue protein sequence, read N- to C-terminus: Tyrosine recombinase XerD (295 aa).

The Core-binding (CB) domain maps to 1 to 85 (MNTIIEEYLN…TIRSFHQFAL (85 aa)). The Tyr recombinase domain maps to 106-289 (KLPDVLEIDE…SKSQIRKMYT (184 aa)). Residues Arg146, Lys170, His241, Arg244, and His267 contribute to the active site. Catalysis depends on Tyr276, which acts as the O-(3'-phospho-DNA)-tyrosine intermediate.

The protein belongs to the 'phage' integrase family. XerD subfamily. Forms a cyclic heterotetrameric complex composed of two molecules of XerC and two molecules of XerD.

It is found in the cytoplasm. Functionally, site-specific tyrosine recombinase, which acts by catalyzing the cutting and rejoining of the recombining DNA molecules. The XerC-XerD complex is essential to convert dimers of the bacterial chromosome into monomers to permit their segregation at cell division. It also contributes to the segregational stability of plasmids. This chain is Tyrosine recombinase XerD, found in Staphylococcus epidermidis (strain ATCC 35984 / DSM 28319 / BCRC 17069 / CCUG 31568 / BM 3577 / RP62A).